Consider the following 242-residue polypeptide: Protein Thf1 (242 aa).

Positions 178–209 (SSDKLQKDLDLYRSNLDKMQQLLTVIEDTLEA) form a coiled coil. The segment at 212–242 (KKRASQKLEKKPEVVEEKEHKENEEQQQSSN) is disordered. Residues 217 to 235 (QKLEKKPEVVEEKEHKENE) show a composition bias toward basic and acidic residues.

The protein belongs to the THF1 family.

Its function is as follows. May be involved in photosynthetic membrane biogenesis. The polypeptide is Protein Thf1 (Crocosphaera subtropica (strain ATCC 51142 / BH68) (Cyanothece sp. (strain ATCC 51142))).